Reading from the N-terminus, the 217-residue chain is N-(5'-phosphoribosyl)anthranilate isomerase (217 aa).

The protein belongs to the TrpF family.

It catalyses the reaction N-(5-phospho-beta-D-ribosyl)anthranilate = 1-(2-carboxyphenylamino)-1-deoxy-D-ribulose 5-phosphate. It functions in the pathway amino-acid biosynthesis; L-tryptophan biosynthesis; L-tryptophan from chorismate: step 3/5. The polypeptide is N-(5'-phosphoribosyl)anthranilate isomerase (Chlorobium chlorochromatii (strain CaD3)).